The following is a 553-amino-acid chain: Hydroxylamine reductase (553 aa).

4 residues coordinate [2Fe-2S] cluster: C3, C6, C18, and C25. Residues H252, E276, C320, C408, C436, C461, E495, and K497 each contribute to the hybrid [4Fe-2O-2S] cluster site. C408 carries the cysteine persulfide modification.

Belongs to the HCP family. [2Fe-2S] cluster is required as a cofactor. Requires hybrid [4Fe-2O-2S] cluster as cofactor.

It is found in the cytoplasm. It carries out the reaction A + NH4(+) + H2O = hydroxylamine + AH2 + H(+). Its function is as follows. Catalyzes the reduction of hydroxylamine to form NH(3) and H(2)O. The protein is Hydroxylamine reductase of Vibrio vulnificus (strain YJ016).